The sequence spans 89 residues: Large ribosomal subunit protein bL27 (89 aa).

A disordered region spans residues Met-1–Gly-22. Positions Thr-7–Gln-19 are enriched in polar residues.

The protein belongs to the bacterial ribosomal protein bL27 family.

In Cyanothece sp. (strain PCC 7425 / ATCC 29141), this protein is Large ribosomal subunit protein bL27.